Reading from the N-terminus, the 148-residue chain is Lipoprotein MlpA (148 aa).

Positions 1 to 17 are cleaved as a signal peptide; that stretch reads MKIINILFCLFLLLLNS. Cys-18 carries N-palmitoyl cysteine lipidation. Cys-18 is lipidated: S-diacylglycerol cysteine. The disordered stretch occupies residues 26–58; that stretch reads LKNNAQQTKSRGKRDLTQKEATPEKPKSKEELL. Residues 38–58 show a composition bias toward basic and acidic residues; that stretch reads KRDLTQKEATPEKPKSKEELL.

It belongs to the Multicopy lipoprotein (Mlp) family.

The protein localises to the cell outer membrane. Its function is as follows. An outer membrane protein that may participate in pathogenesis. Some human Lyme disease patients have antibodies against this protein. The Mlp proteins probably undergo intragenic recombination, generating new alleles. The sequence is that of Lipoprotein MlpA (mlpA) from Borreliella burgdorferi (strain ATCC 35210 / DSM 4680 / CIP 102532 / B31) (Borrelia burgdorferi).